Here is a 222-residue protein sequence, read N- to C-terminus: Glutathione S-transferase A1 (222 aa).

N-acetylmethionine is present on Met-1. At Ala-2 the chain carries N-acetylalanine; in Glutathione S-transferase A1, N-terminally processed. In terms of domain architecture, GST N-terminal spans 3-83 (EKPKLHYFNA…YIASKYNLYG (81 aa)). Position 4 is an N6-succinyllysine (Lys-4). Residues Tyr-9, Arg-45, 54-55 (QV), and 67-68 (QT) each bind glutathione. Residues 85-207 (DIKERALIDM…LQPGSPRKPP (123 aa)) enclose the GST C-terminal domain.

The protein belongs to the GST superfamily. Alpha family. Homodimer or heterodimer of GSTA1 and GSTA2. Liver.

The protein localises to the cytoplasm. The enzyme catalyses RX + glutathione = an S-substituted glutathione + a halide anion + H(+). The catalysed reaction is prostaglandin A2 + glutathione = prostaglandin A2-S-(R)-glutathione. It catalyses the reaction prostaglandin J2 + glutathione = prostaglandin J2-S-(R)-glutathione. It carries out the reaction (13S)-hydroperoxy-(9Z,11E)-octadecadienoate + 2 glutathione = (13S)-hydroxy-(9Z,11E)-octadecadienoate + glutathione disulfide + H2O. The enzyme catalyses androst-5-ene-3,17-dione = androst-4-ene-3,17-dione. The isomerase activity is inhibited by S-methylglutathione (GSMe). Functionally, glutathione S-transferase that catalyzes the nucleophilic attack of the sulfur atom of glutathione on the electrophilic groups of a wide range of exogenous and endogenous compounds. Involved in the formation of glutathione conjugates of both prostaglandin A2 (PGA2) and prostaglandin J2 (PGJ2). It also catalyzes the isomerization of D5-androstene-3,17-dione (AD) into D4-androstene-3,17-dione and may therefore play an important role in hormone biosynthesis. Through its glutathione-dependent peroxidase activity toward the fatty acid hydroperoxide (13S)-hydroperoxy-(9Z,11E)-octadecadienoate/13-HPODE it is also involved in the metabolism of oxidized linoleic acid. The protein is Glutathione S-transferase A1 (GSTA1) of Homo sapiens (Human).